Reading from the N-terminus, the 390-residue chain is Putative transposase YncI (390 aa).

The protein belongs to the transposase 11 family.

This chain is Putative transposase YncI (yncI), found in Escherichia coli O157:H7.